A 265-amino-acid chain; its full sequence is Aquaporin-5 (265 aa).

Over 1-12 the chain is Cytoplasmic; that stretch reads MKKEVCSLAFLK. A helical membrane pass occupies residues 13-33; the sequence is AVFAEFLATLIFVFFGLASAL. Residues 34–39 lie on the Extracellular side of the membrane; sequence KWPSAL. The helical transmembrane segment at 40 to 60 threads the bilayer; it reads PTILQIALAFGLAIGTLAQAL. Topologically, residues 61–65 are cytoplasmic; that stretch reads GPVSG. Residues 66 to 74 constitute an intramembrane region (discontinuously helical); that stretch reads GHINPAITL. Positions 69-71 match the NPA 1 motif; that stretch reads NPA. Over 75–87 the chain is Cytoplasmic; it reads ALLVGNQISLLRA. The chain crosses the membrane as a helical span at residues 88-108; that stretch reads VFYVVAQLVGAIAGAGILYGL. At 109 to 126 the chain is on the extracellular side; sequence APGNARGNLAVNSLNNNT. The N-linked (GlcNAc...) asparagine glycan is linked to Asn124. The helical transmembrane segment at 127–147 threads the bilayer; that stretch reads TPGQAVVVEMILTFQLALCIF. The Cytoplasmic portion of the chain corresponds to 148–158; that stretch reads SSTDSRRTSPV. A helical transmembrane segment spans residues 159-179; it reads GSPALSIGLSVTLGHLVGIYF. Position 180 (Thr180) is a topological domain, extracellular. The segment at residues 181-191 is an intramembrane region (discontinuously helical); it reads GCSMNPARSFG. The NPA 2 signature appears at 185–187; the sequence is NPA. The Extracellular portion of the chain corresponds to 192–203; that stretch reads PAVVMNRFSPSH. The chain crosses the membrane as a helical span at residues 204-224; sequence WVFWVGPIVGAAVAAILYFYL. The Cytoplasmic portion of the chain corresponds to 225-265; sequence LFPNSLSLSERVAVVKGTYESEEDWEEQREERKKTMELTAH.

The protein belongs to the MIP/aquaporin (TC 1.A.8) family. As to quaternary structure, homotetramer; each monomer provides an independent water pore. Interacts with TRPV4; the interaction is probably indirect and regulates TRPV4 activation by hypotonicity.

The protein resides in the apical cell membrane. It localises to the cell membrane. The protein localises to the cytoplasmic vesicle membrane. It carries out the reaction H2O(in) = H2O(out). In terms of biological role, aquaporins form homotetrameric transmembrane channels, with each monomer independently mediating water transport across the plasma membrane along its osmotic gradient. Plays an important role in fluid secretion in salivary glands. Required for TRPV4 activation by hypotonicity. Together with TRPV4, controls regulatory volume decrease in salivary epithelial cells. Seems to play a redundant role in water transport in the eye, lung and in sweat glands. This Sus scrofa (Pig) protein is Aquaporin-5.